The chain runs to 560 residues: DNA ligase B (560 aa).

Lysine 124 functions as the N6-AMP-lysine intermediate in the catalytic mechanism.

This sequence belongs to the NAD-dependent DNA ligase family. LigB subfamily.

The catalysed reaction is NAD(+) + (deoxyribonucleotide)n-3'-hydroxyl + 5'-phospho-(deoxyribonucleotide)m = (deoxyribonucleotide)n+m + AMP + beta-nicotinamide D-nucleotide.. Catalyzes the formation of phosphodiester linkages between 5'-phosphoryl and 3'-hydroxyl groups in double-stranded DNA using NAD as a coenzyme and as the energy source for the reaction. This is DNA ligase B from Escherichia coli O1:K1 / APEC.